Reading from the N-terminus, the 335-residue chain is Ornithine carbamoyltransferase (335 aa).

Carbamoyl phosphate-binding positions include 60 to 63 (STRT), glutamine 87, arginine 111, and 138 to 141 (HPTQ). L-ornithine-binding positions include asparagine 171, aspartate 235, and 239–240 (SM). Carbamoyl phosphate is bound by residues 277–278 (CL) and arginine 322.

It belongs to the aspartate/ornithine carbamoyltransferase superfamily. OTCase family.

It localises to the cytoplasm. It catalyses the reaction carbamoyl phosphate + L-ornithine = L-citrulline + phosphate + H(+). It participates in amino-acid biosynthesis; L-arginine biosynthesis; L-arginine from L-ornithine and carbamoyl phosphate: step 1/3. Its function is as follows. Reversibly catalyzes the transfer of the carbamoyl group from carbamoyl phosphate (CP) to the N(epsilon) atom of ornithine (ORN) to produce L-citrulline. In Streptomyces avermitilis (strain ATCC 31267 / DSM 46492 / JCM 5070 / NBRC 14893 / NCIMB 12804 / NRRL 8165 / MA-4680), this protein is Ornithine carbamoyltransferase.